The sequence spans 285 residues: Acetylglutamate kinase (285 aa).

Substrate-binding positions include 69–70 (GG), arginine 91, and asparagine 183.

Belongs to the acetylglutamate kinase family. ArgB subfamily.

It localises to the cytoplasm. The enzyme catalyses N-acetyl-L-glutamate + ATP = N-acetyl-L-glutamyl 5-phosphate + ADP. It functions in the pathway amino-acid biosynthesis; L-arginine biosynthesis; N(2)-acetyl-L-ornithine from L-glutamate: step 2/4. Functionally, catalyzes the ATP-dependent phosphorylation of N-acetyl-L-glutamate. The protein is Acetylglutamate kinase of Jannaschia sp. (strain CCS1).